A 144-amino-acid chain; its full sequence is Large ribosomal subunit protein uL15 (144 aa).

Residues 1 to 44 (MNLNELQPAAGSRKLRNRVGRGTSSGNGKTSGRGQKGQKARGKV) form a disordered region. Gly residues predominate over residues 23–35 (TSSGNGKTSGRGQ).

Belongs to the universal ribosomal protein uL15 family. As to quaternary structure, part of the 50S ribosomal subunit.

Its function is as follows. Binds to the 23S rRNA. The chain is Large ribosomal subunit protein uL15 from Leuconostoc citreum (strain KM20).